The following is a 317-amino-acid chain: Tyrosine--tRNA ligase (317 aa).

An L-tyrosine-binding site is contributed by Y33. A 'HIGH' region motif is present at residues P38–H46. L-tyrosine-binding residues include Y155, Q159, D162, and Q177. The short motif at K211–S215 is the 'KMSKS' region element. Residue S214 coordinates ATP.

The protein belongs to the class-I aminoacyl-tRNA synthetase family. TyrS type 3 subfamily. In terms of assembly, homodimer.

It localises to the cytoplasm. It catalyses the reaction tRNA(Tyr) + L-tyrosine + ATP = L-tyrosyl-tRNA(Tyr) + AMP + diphosphate + H(+). In terms of biological role, catalyzes the attachment of tyrosine to tRNA(Tyr) in a two-step reaction: tyrosine is first activated by ATP to form Tyr-AMP and then transferred to the acceptor end of tRNA(Tyr). The chain is Tyrosine--tRNA ligase from Methanosarcina mazei (strain ATCC BAA-159 / DSM 3647 / Goe1 / Go1 / JCM 11833 / OCM 88) (Methanosarcina frisia).